Reading from the N-terminus, the 122-residue chain is Large ribosomal subunit protein uL14 (122 aa).

The protein belongs to the universal ribosomal protein uL14 family. Part of the 50S ribosomal subunit. Forms a cluster with proteins L3 and L19. In the 70S ribosome, L14 and L19 interact and together make contacts with the 16S rRNA in bridges B5 and B8.

Binds to 23S rRNA. Forms part of two intersubunit bridges in the 70S ribosome. The chain is Large ribosomal subunit protein uL14 from Rhodococcus erythropolis (strain PR4 / NBRC 100887).